The following is a 179-amino-acid chain: uncharacterized protein (179 aa).

This sequence belongs to the CAPAB/TerDEXZ family.

This is an uncharacterized protein from Synechocystis sp. (strain ATCC 27184 / PCC 6803 / Kazusa).